Here is a 288-residue protein sequence, read N- to C-terminus: Pantothenate synthetase (288 aa).

30-37 is a binding site for ATP; it reads MGNLHEGH. Residue His37 is the Proton donor of the active site. Gln61 contacts (R)-pantoate. Residue Gln61 coordinates beta-alanine. 148 to 151 is a binding site for ATP; that stretch reads GQKD. Residue Gln154 participates in (R)-pantoate binding. ATP is bound by residues Val177 and 185–188; that span reads LSSR.

The protein belongs to the pantothenate synthetase family. In terms of assembly, homodimer.

Its subcellular location is the cytoplasm. The enzyme catalyses (R)-pantoate + beta-alanine + ATP = (R)-pantothenate + AMP + diphosphate + H(+). It functions in the pathway cofactor biosynthesis; (R)-pantothenate biosynthesis; (R)-pantothenate from (R)-pantoate and beta-alanine: step 1/1. Functionally, catalyzes the condensation of pantoate with beta-alanine in an ATP-dependent reaction via a pantoyl-adenylate intermediate. The protein is Pantothenate synthetase of Psychrobacter arcticus (strain DSM 17307 / VKM B-2377 / 273-4).